A 757-amino-acid chain; its full sequence is Inhibitor of nuclear factor kappa-B kinase subunit beta (757 aa).

In terms of domain architecture, Protein kinase spans 15 to 300 (WEMKERLGTG…DPQYGPNGCF (286 aa)). Residues 21-29 (LGTGGFGNV) and Lys-44 contribute to the ATP site. The active-site Proton acceptor is the Asp-145. Lys-163 is covalently cross-linked (Glycyl lysine isopeptide (Lys-Gly) (interchain with G-Cter in ubiquitin)). Phosphoserine; by TBK1 and PKC/PRKCZ is present on Ser-177. Cys-179 carries the S-nitrosocysteine modification. A Phosphoserine; by TBK1, PKC/PRKCZ and PDPK1 modification is found at Ser-181. Pro-191 carries the post-translational modification Hydroxyproline. The segment at 458–479 (LLRNNSCLSKMKNAMASTAQQL) is leucine-zipper. A Phosphoserine; by autocatalysis modification is found at Ser-670. Phosphoserine is present on Ser-672. Phosphoserine; by autocatalysis is present on residues Ser-675, Ser-682, Ser-689, Ser-692, Ser-697, Ser-705, Ser-733, and Ser-740. The tract at residues 682-703 (SHPGHLMSQPSSACDSLPDSDK) is disordered. Positions 737–742 (LDWSWL) are NEMO-binding.

Belongs to the protein kinase superfamily. Ser/Thr protein kinase family. I-kappa-B kinase subfamily. In terms of assembly, component of the I-kappa-B-kinase (IKK) core complex consisting of CHUK, IKBKB and IKBKG; probably four alpha/CHUK-beta/IKBKB dimers are associated with four gamma/IKBKG subunits. The IKK core complex seems to associate with regulatory or adapter proteins to form a IKK-signalosome holo-complex. The IKK complex associates with TERF2IP/RAP1, leading to promote IKK-mediated phosphorylation of RELA/p65. Part of a complex composed of NCOA2, NCOA3, CHUK/IKKA, IKBKB, IKBKG and CREBBP. Part of a 70-90 kDa complex at least consisting of CHUK/IKKA, IKBKB, NFKBIA, RELA, ELP1 and MAP3K14. Found in a membrane raft complex, at least composed of BCL10, CARD11, DPP4 and IKBKB. Interacts with SQSTM1 through PRKCZ or PRKCI. Forms an NGF-induced complex with IKBKB, PRKCI and TRAF6. May interact with MAVS/IPS1. Interacts with NALP2. Interacts with TICAM1. Interacts with FAF1; the interaction disrupts the IKK complex formation. Interacts with ATM. Part of a ternary complex consisting of TANK, IKBKB and IKBKG. Interacts with NIBP; the interaction is direct. Interacts with ARRB1 and ARRB2. Interacts with TRIM21. Interacts with NLRC5; prevents IKBKB phosphorylation and kinase activity. Interacts with PDPK1. Interacts with EIF2AK2/PKR. The phosphorylated form interacts with PPM1A and PPM1B. Interacts with ZNF268 isoform 2; the interaction is further increased in a TNF-alpha-dependent manner. Interacts with IKBKE. Interacts with ZC3H12A. Interacts with AKAP13. Interacts with LRRC14; disrupts IKBKB-IKBKG interaction preventing I-kappa-B-kinase (IKK) core complex formation and leading to a decrease of IKBKB phosphorylation and NF-kappaB activation. Interacts with SASH1. Interacts with ARFIP2. Interacts with FKBP5. Upon cytokine stimulation, phosphorylated on Ser-177 and Ser-181 by MEKK1 and/or MAP3K14/NIK as well as TBK1 and PRKCZ; which enhances activity. Phosphorylated by MAP3K7/TAK1 in response to NOD1 and NOD2 signaling, promoting activation and phosphorylation of NF-kappa-B inhibitors, leading to NF-kappa-B activation. Once activated, autophosphorylates on the C-terminal serine cluster; which decreases activity and prevents prolonged activation of the inflammatory response. Phosphorylated by the IKK-related kinases TBK1 and IKBKE, which is associated with reduced CHUK/IKKA and IKBKB activity and NF-kappa-B-dependent gene transcription. Dephosphorylated at Ser-177 and Ser-181 by PPM1A and PPM1B. Post-translationally, ubiquitinated. Monoubiquitination involves TRIM21 that leads to inhibition of Tax-induced NF-kappa-B signaling. 'Ser-163' may not serve as a monoubiquitination site. Ubiquitination on 'Ser-163' may modulate phosphorylation on C-terminal serine residues. In terms of processing, hydroxylated by PHD1/EGLN2, loss of hydroxylation under hypoxic conditions results in activation of NF-kappa-B.

It is found in the cytoplasm. The protein resides in the nucleus. Its subcellular location is the membrane raft. It catalyses the reaction L-seryl-[I-kappa-B protein] + ATP = O-phospho-L-seryl-[I-kappa-B protein] + ADP + H(+). The catalysed reaction is L-seryl-[protein] + ATP = O-phospho-L-seryl-[protein] + ADP + H(+). The enzyme catalyses L-threonyl-[protein] + ATP = O-phospho-L-threonyl-[protein] + ADP + H(+). Functionally, serine kinase that plays an essential role in the NF-kappa-B signaling pathway which is activated by multiple stimuli such as inflammatory cytokines, bacterial or viral products, DNA damages or other cellular stresses. Acts as a part of the canonical IKK complex in the conventional pathway of NF-kappa-B activation. Phosphorylates inhibitors of NF-kappa-B on 2 critical serine residues. These modifications allow polyubiquitination of the inhibitors and subsequent degradation by the proteasome. In turn, free NF-kappa-B is translocated into the nucleus and activates the transcription of hundreds of genes involved in immune response, growth control, or protection against apoptosis. In addition to the NF-kappa-B inhibitors, phosphorylates several other components of the signaling pathway including NEMO/IKBKG, NF-kappa-B subunits RELA and NFKB1, as well as IKK-related kinases TBK1 and IKBKE. IKK-related kinase phosphorylations may prevent the overproduction of inflammatory mediators since they exert a negative regulation on canonical IKKs. Phosphorylates FOXO3, mediating the TNF-dependent inactivation of this pro-apoptotic transcription factor. Also phosphorylates other substrates including NAA10, NCOA3, BCL10 and IRS1. Phosphorylates RIPK1 at 'Ser-25' which represses its kinase activity and consequently prevents TNF-mediated RIPK1-dependent cell death. Phosphorylates the C-terminus of IRF5, stimulating IRF5 homodimerization and translocation into the nucleus. This chain is Inhibitor of nuclear factor kappa-B kinase subunit beta (Ikbkb), found in Rattus norvegicus (Rat).